A 1477-amino-acid polypeptide reads, in one-letter code: Putative insulin-like peptide receptor (1477 aa).

A signal peptide spans 1–24; that stretch reads MMRNVQSFYFLFLLIVLNFHVVLS. At 25–980 the chain is on the extracellular side; that stretch reads AVCIGQRATT…LSVTKNNNQL (956 aa). N-linked (GlcNAc...) asparagine glycosylation is found at Asn55, Asn255, Asn300, Asn325, Asn457, Asn491, Asn549, Asn644, Asn732, Asn791, Asn874, Asn895, and Asn957. Fibronectin type-III domains follow at residues 652–750 and 780–869; these read EPLG…IKAD and NKSP…IVQA. The region spanning 880 to 971 is the Fibronectin type-III 3 domain; sequence LDSKMVRVQV…EEIHFKVAEL (92 aa). Residues 981 to 1001 traverse the membrane as a helical segment; that stretch reads IIGIISAVSAVIVALLVFILL. Topologically, residues 1002–1477 are cytoplasmic; that stretch reads YMFLHRKLEK…EIFYGKPIPV (476 aa). One can recognise a Protein kinase domain in the interval 1044 to 1315; sequence IELIRELGQG…LENEVDDDFV (272 aa). ATP-binding positions include 1050 to 1058 and Lys1077; that span reads LGQGSFGMV. The Proton acceptor role is filled by Asp1175. Tyr1201 is subject to Phosphotyrosine; by autocatalysis. 2 disordered regions span residues 1350 to 1376 and 1391 to 1421; these read YTKG…KSKE and KYDA…SNAC. Polar residues predominate over residues 1356–1368; it reads NMQNMLSRSQNRK. Positions 1403–1412 are enriched in basic residues; sequence KKKKRPRSKR.

This sequence belongs to the protein kinase superfamily. Tyr protein kinase family. Insulin receptor subfamily. The cofactor is Mn(2+). Expressed in dividing epithelial cells.

Its subcellular location is the membrane. It carries out the reaction L-tyrosyl-[protein] + ATP = O-phospho-L-tyrosyl-[protein] + ADP + H(+). Functionally, this receptor probably binds an insulin related protein and has a tyrosine-protein kinase activity. This chain is Putative insulin-like peptide receptor (HTK7), found in Hydra vulgaris (Hydra).